A 22-amino-acid chain; its full sequence is Myofibril-bound serine protease (22 aa).

Belongs to the peptidase S1 family. As to expression, detected in muscle (at protein level).

It is found in the cytoplasm. With respect to regulation, inhibited by the serine protease inhibitors, antipain, aprotinin, DFP, leupeptin, STI and TLCK, and by the cysteine proteinase inhibitors DTNB and to a lesser extent E-64. Not inhibited by the metalloproteinase inhibitor EDTA. Functionally, serine protease that selectively cleaves Arg-|-Xaa bonds. The sequence is that of Myofibril-bound serine protease from Cyprinus carpio (Common carp).